The sequence spans 147 residues: MVHFTAEEKAAITSLWGKMNVEEAGGEALGRLLVVYPWTQRFFDNFGNLSSPSAILGNLKVKAHGKKVLTSFGDAIKNMDNLKTTFAKLSELHCDKLHVDPENFRLLGNVMVIILATHFGKEFTPEVQAAWQKLVSAVAIALGHKYH.

Positions 3-147 (HFTAEEKAAI…VAIALGHKYH (145 aa)) constitute a Globin domain. Phosphoserine is present on residues S14 and S51. 2 residues coordinate heme b: H64 and H93.

The protein belongs to the globin family. In terms of assembly, heterotetramer of two alpha chains and two epsilon chains in early embryonic hemoglobin Gower-2; two zeta chains and two epsilon chains in early embryonic hemoglobin Gower-1. In terms of tissue distribution, red blood cells.

The epsilon chain is a beta-type chain of early mammalian embryonic hemoglobin. The polypeptide is Hemoglobin subunit epsilon (HBE1) (Pithecia irrorata (Gray monk saki)).